Reading from the N-terminus, the 275-residue chain is Diaminopimelate epimerase (275 aa).

Positions 12, 45, and 65 each coordinate substrate. Catalysis depends on Cys74, which acts as the Proton donor. Residues 75 to 76 (GN), Asn158, Asn191, and 209 to 210 (ER) each bind substrate. Cys218 serves as the catalytic Proton acceptor. Residue 219–220 (GS) participates in substrate binding.

The protein belongs to the diaminopimelate epimerase family. Homodimer.

It localises to the cytoplasm. It carries out the reaction (2S,6S)-2,6-diaminopimelate = meso-2,6-diaminopimelate. It participates in amino-acid biosynthesis; L-lysine biosynthesis via DAP pathway; DL-2,6-diaminopimelate from LL-2,6-diaminopimelate: step 1/1. In terms of biological role, catalyzes the stereoinversion of LL-2,6-diaminopimelate (L,L-DAP) to meso-diaminopimelate (meso-DAP), a precursor of L-lysine and an essential component of the bacterial peptidoglycan. In Shewanella amazonensis (strain ATCC BAA-1098 / SB2B), this protein is Diaminopimelate epimerase.